An 83-amino-acid polypeptide reads, in one-letter code: High-potential iron-sulfur protein (83 aa).

Residues cysteine 43, cysteine 46, cysteine 61, and cysteine 75 each coordinate [4Fe-4S] cluster.

Belongs to the high-potential iron-sulfur protein (HiPIP) family. As to quaternary structure, homodimer.

In terms of biological role, specific class of high-redox-potential 4Fe-4S ferredoxins. Functions in anaerobic electron transport in most purple and in some other photosynthetic bacteria and in at least one genus (Paracoccus) of halophilic, denitrifying bacteria. The protein is High-potential iron-sulfur protein (hip) of Thermochromatium tepidum (Chromatium tepidum).